We begin with the raw amino-acid sequence, 1295 residues long: DNA-directed RNA polymerase subunit beta' (1295 aa).

Zn(2+)-binding residues include C60, C62, C75, and C78. The Mg(2+) site is built by D516, D518, and D520. Zn(2+) is bound by residues C841, C914, C921, and C924.

The protein belongs to the RNA polymerase beta' chain family. As to quaternary structure, the RNAP catalytic core consists of 2 alpha, 1 beta, 1 beta' and 1 omega subunit. When a sigma factor is associated with the core the holoenzyme is formed, which can initiate transcription. Requires Mg(2+) as cofactor. Zn(2+) is required as a cofactor.

The catalysed reaction is RNA(n) + a ribonucleoside 5'-triphosphate = RNA(n+1) + diphosphate. In terms of biological role, DNA-dependent RNA polymerase catalyzes the transcription of DNA into RNA using the four ribonucleoside triphosphates as substrates. In Dehalococcoides mccartyi (strain ATCC BAA-2266 / KCTC 15142 / 195) (Dehalococcoides ethenogenes (strain 195)), this protein is DNA-directed RNA polymerase subunit beta'.